The chain runs to 636 residues: Asparagine synthetase domain-containing protein 1 (636 aa).

The Nucleophile role is filled by Cys2. Residues 2–187 (CGICCVVALS…ASGIFKMDLR (186 aa)) enclose the Glutamine amidotransferase type-2 domain. Residues 291–607 (QFIDVLDEAV…GLEAASILPK (317 aa)) form the Asparagine synthetase domain.

This is Asparagine synthetase domain-containing protein 1 (ASNSD1) from Gallus gallus (Chicken).